The chain runs to 244 residues: N-(5'-phosphoribosyl)anthranilate isomerase 3, chloroplastic (244 aa).

A chloroplast-targeting transit peptide spans 1 to 32 (MSTGISSDLHLHPRALNFSKTSKSGLSNRKVS).

It belongs to the TrpF family.

It localises to the plastid. It is found in the chloroplast. The catalysed reaction is N-(5-phospho-beta-D-ribosyl)anthranilate = 1-(2-carboxyphenylamino)-1-deoxy-D-ribulose 5-phosphate. It participates in amino-acid biosynthesis; L-tryptophan biosynthesis; L-tryptophan from chorismate: step 3/5. The sequence is that of N-(5'-phosphoribosyl)anthranilate isomerase 3, chloroplastic (PAI3) from Arabidopsis thaliana (Mouse-ear cress).